The following is a 112-amino-acid chain: uncharacterized protein (112 aa).

Its subcellular location is the plastid. It localises to the chloroplast. This is an uncharacterized protein from Chlamydomonas reinhardtii (Chlamydomonas smithii).